Reading from the N-terminus, the 235-residue chain is Alpha-S2-casein (235 aa).

An N-terminal signal peptide occupies residues 1–15; the sequence is MKFFIFTCLLAVAFA. Serine 23, serine 24, serine 25, serine 28, serine 47, serine 72, serine 73, serine 74, serine 77, serine 147, serine 149, and serine 168 each carry phosphoserine. Over residues 144 to 158 the composition is skewed to polar residues; the sequence is EELSTSEEPVSSSQE. The segment at 144-163 is disordered; it reads EELSTSEEPVSSSQEENTKT.

This sequence belongs to the alpha-casein family. As to expression, mammary gland specific. Secreted in milk.

The protein localises to the secreted. Its function is as follows. Important role in the capacity of milk to transport calcium phosphate. The sequence is that of Alpha-S2-casein (CSN1S2) from Sus scrofa (Pig).